A 397-amino-acid chain; its full sequence is Succinyl-diaminopimelate desuccinylase (397 aa).

His-74 contributes to the Zn(2+) binding site. The active site involves Asp-76. Position 107 (Asp-107) interacts with Zn(2+). The active-site Proton acceptor is Glu-141. Residues Glu-142, Glu-170, and His-368 each coordinate Zn(2+).

It belongs to the peptidase M20A family. DapE subfamily. In terms of assembly, homodimer. Requires Zn(2+) as cofactor. The cofactor is Co(2+).

It catalyses the reaction N-succinyl-(2S,6S)-2,6-diaminopimelate + H2O = (2S,6S)-2,6-diaminopimelate + succinate. It functions in the pathway amino-acid biosynthesis; L-lysine biosynthesis via DAP pathway; LL-2,6-diaminopimelate from (S)-tetrahydrodipicolinate (succinylase route): step 3/3. Functionally, catalyzes the hydrolysis of N-succinyl-L,L-diaminopimelic acid (SDAP), forming succinate and LL-2,6-diaminopimelate (DAP), an intermediate involved in the bacterial biosynthesis of lysine and meso-diaminopimelic acid, an essential component of bacterial cell walls. This Mesorhizobium japonicum (strain LMG 29417 / CECT 9101 / MAFF 303099) (Mesorhizobium loti (strain MAFF 303099)) protein is Succinyl-diaminopimelate desuccinylase.